A 91-amino-acid polypeptide reads, in one-letter code: DNA-directed RNA polymerase subunit omega (91 aa).

The protein belongs to the RNA polymerase subunit omega family. As to quaternary structure, the RNAP catalytic core consists of 2 alpha, 1 beta, 1 beta' and 1 omega subunit. When a sigma factor is associated with the core the holoenzyme is formed, which can initiate transcription.

It carries out the reaction RNA(n) + a ribonucleoside 5'-triphosphate = RNA(n+1) + diphosphate. Promotes RNA polymerase assembly. Latches the N- and C-terminal regions of the beta' subunit thereby facilitating its interaction with the beta and alpha subunits. The protein is DNA-directed RNA polymerase subunit omega of Yersinia enterocolitica serotype O:8 / biotype 1B (strain NCTC 13174 / 8081).